The following is a 309-amino-acid chain: p-hydroxybenzoic acid efflux pump subunit AaeA (309 aa).

Residues 12–32 (AITVVLVILAFIAIFNAWVYY) form a helical membrane-spanning segment.

This sequence belongs to the membrane fusion protein (MFP) (TC 8.A.1) family.

The protein resides in the cell inner membrane. Forms an efflux pump with AaeB. The sequence is that of p-hydroxybenzoic acid efflux pump subunit AaeA from Escherichia coli O157:H7.